The chain runs to 257 residues: Small ribosomal subunit protein uS15m (257 aa).

Residues 1–57 (MLRVAWRTLSLIRTRAVTQVLVPGLPGGGSAKFPFNQWGLQPRSLLLQAARGYVVRK) constitute a mitochondrion transit peptide. Residues 225–257 (RALKAAAAAQKQAKRRNPDSPAKAIPKTLKDSQ) are disordered.

Belongs to the universal ribosomal protein uS15 family. As to quaternary structure, component of the mitochondrial small ribosomal subunit (mt-SSU). Mature mammalian 55S mitochondrial ribosomes consist of a small (28S) and a large (39S) subunit. The 28S small subunit contains a 12S ribosomal RNA (12S mt-rRNA) and 30 different proteins. The 39S large subunit contains a 16S rRNA (16S mt-rRNA), a copy of mitochondrial valine transfer RNA (mt-tRNA(Val)), which plays an integral structural role, and 52 different proteins. Interacts with METTL17.

The protein resides in the mitochondrion matrix. This Homo sapiens (Human) protein is Small ribosomal subunit protein uS15m (MRPS15).